The following is a 429-amino-acid chain: Enolase (429 aa).

Position 163 (Q163) interacts with (2R)-2-phosphoglycerate. The active-site Proton donor is the E205. Positions 242, 285, and 312 each coordinate Mg(2+). Residues K337, R366, S367, and K388 each contribute to the (2R)-2-phosphoglycerate site. K337 functions as the Proton acceptor in the catalytic mechanism.

Belongs to the enolase family. Requires Mg(2+) as cofactor.

Its subcellular location is the cytoplasm. The protein resides in the secreted. It localises to the cell surface. It carries out the reaction (2R)-2-phosphoglycerate = phosphoenolpyruvate + H2O. Its pathway is carbohydrate degradation; glycolysis; pyruvate from D-glyceraldehyde 3-phosphate: step 4/5. Its function is as follows. Catalyzes the reversible conversion of 2-phosphoglycerate (2-PG) into phosphoenolpyruvate (PEP). It is essential for the degradation of carbohydrates via glycolysis. This chain is Enolase, found in Azoarcus sp. (strain BH72).